A 95-amino-acid chain; its full sequence is Citrate lyase acyl carrier protein (95 aa).

S14 is subject to O-(phosphoribosyl dephospho-coenzyme A)serine.

This sequence belongs to the CitD family. In terms of assembly, oligomer with a subunit composition of (alpha,beta,gamma)6.

Its subcellular location is the cytoplasm. Its function is as follows. Covalent carrier of the coenzyme of citrate lyase. This chain is Citrate lyase acyl carrier protein, found in Haemophilus ducreyi (strain 35000HP / ATCC 700724).